Consider the following 383-residue polypeptide: S-adenosylmethionine synthase (383 aa).

His-15 contributes to the ATP binding site. Residue Asp-17 participates in Mg(2+) binding. Residue Glu-43 participates in K(+) binding. Residues Glu-56 and Gln-99 each coordinate L-methionine. A flexible loop region spans residues 99–109 (QSPDINQGVDR). ATP is bound by residues 164-166 (DAK), 230-231 (RF), Asp-239, 245-246 (RK), Ala-262, and Lys-266. Asp-239 lines the L-methionine pocket. Residue Lys-270 participates in L-methionine binding.

This sequence belongs to the AdoMet synthase family. As to quaternary structure, homotetramer; dimer of dimers. Requires Mg(2+) as cofactor. K(+) is required as a cofactor.

The protein localises to the cytoplasm. The catalysed reaction is L-methionine + ATP + H2O = S-adenosyl-L-methionine + phosphate + diphosphate. Its pathway is amino-acid biosynthesis; S-adenosyl-L-methionine biosynthesis; S-adenosyl-L-methionine from L-methionine: step 1/1. In terms of biological role, catalyzes the formation of S-adenosylmethionine (AdoMet) from methionine and ATP. The overall synthetic reaction is composed of two sequential steps, AdoMet formation and the subsequent tripolyphosphate hydrolysis which occurs prior to release of AdoMet from the enzyme. The protein is S-adenosylmethionine synthase of Shewanella amazonensis (strain ATCC BAA-1098 / SB2B).